The following is a 517-amino-acid chain: V-type proton ATPase subunit B (517 aa).

Position 4 is a phosphoserine (Ser-4). A Glycyl lysine isopeptide (Lys-Gly) (interchain with G-Cter in ubiquitin) cross-link involves residue Lys-14. The residue at position 137 (Ser-137) is a Phosphoserine. Arg-381 lines the ATP pocket. Residues 487–517 form a disordered region; sequence RARDDADEDEEDPDTRSSGKKKDASQEESLI. The span at 500–511 shows a compositional bias: basic and acidic residues; the sequence is DTRSSGKKKDAS. 2 positions are modified to phosphoserine: Ser-503 and Ser-504. Lys-508 participates in a covalent cross-link: Glycyl lysine isopeptide (Lys-Gly) (interchain with G-Cter in ubiquitin). Residue Ser-511 is modified to Phosphoserine; by ATM or ATR. Ser-515 carries the phosphoserine modification.

It belongs to the ATPase alpha/beta chains family. In terms of assembly, V-ATPase is a heteromultimeric enzyme composed of a peripheral catalytic V1 complex (components A to H) attached to an integral membrane V0 proton pore complex (components: a, c, c', c'', d, e, f and VOA1). Interacts with RAV1 and RAV2 components of the RAVE complex, which are essential for the stability and assembly of V-ATPase.

It is found in the vacuole membrane. Its function is as follows. Non-catalytic subunit of the V1 complex of vacuolar(H+)-ATPase (V-ATPase), a multisubunit enzyme composed of a peripheral complex (V1) that hydrolyzes ATP and a membrane integral complex (V0) that translocates protons. V-ATPase is responsible for acidifying and maintaining the pH of intracellular compartments. The polypeptide is V-type proton ATPase subunit B (VMA2) (Saccharomyces cerevisiae (strain ATCC 204508 / S288c) (Baker's yeast)).